Reading from the N-terminus, the 305-residue chain is METKDGFLVINKDKGCTSHDCVKQIRKLLNTKKVGHTGTLDPEVIGILPIAIGSATRFIQYLPQGKTYIGQIKLGIRTNTDDIHGEIINQKSWPKISDEKLDQYLNRFRGIIKQIPPKVSSVHINGERAYKKSFRNEVFELAPREVKIDELTLMKWDQINGILEIKVKCSAGTYIRAIARDLGEILNSEGCLLQLKRISACGFDEQNSIKISDIEKDKKNSKNFIIPTISALNHISSFVLSTEEQINFWQTGRAIRVDINYFQENKSFDYKKPIKVIDKKQILLGIGFLNEEQSNINPKLVLNAK.

The active-site Nucleophile is the aspartate 41.

It belongs to the pseudouridine synthase TruB family. Type 1 subfamily.

The enzyme catalyses uridine(55) in tRNA = pseudouridine(55) in tRNA. Functionally, responsible for synthesis of pseudouridine from uracil-55 in the psi GC loop of transfer RNAs. This Prochlorococcus marinus (strain MIT 9301) protein is tRNA pseudouridine synthase B.